The sequence spans 164 residues: Endoribonuclease YbeY (164 aa).

Positions 125, 129, and 135 each coordinate Zn(2+).

Belongs to the endoribonuclease YbeY family. Zn(2+) is required as a cofactor.

The protein resides in the cytoplasm. Single strand-specific metallo-endoribonuclease involved in late-stage 70S ribosome quality control and in maturation of the 3' terminus of the 16S rRNA. The protein is Endoribonuclease YbeY of Paramagnetospirillum magneticum (strain ATCC 700264 / AMB-1) (Magnetospirillum magneticum).